Consider the following 343-residue polypeptide: Transmembrane protein 120A (343 aa).

The Cytoplasmic portion of the chain corresponds to 1–132 (MQSPPPDPLG…KQAKFAYKDE (132 aa)). Lysine 130 is a binding site for CoA. Residues 133 to 152 (YEKFKLYLTIILIVISFTCR) form a helical membrane-spanning segment. Residues 153–158 (FLLNSR) are Extracellular-facing. A helical transmembrane segment spans residues 159-177 (VTDAAFNFLLVWYYCTLTI). Residues 178-190 (RESILINNGSRIK) lie on the Cytoplasmic side of the membrane. CoA contacts are provided by serine 187 and arginine 188. The chain crosses the membrane as a helical span at residues 191–209 (GWWVFHHYVSTFLSGVMLT). Residues 210–218 (WPDGLMYQK) lie on the Extracellular side of the membrane. Residues 219 to 240 (FRNQFLSFSMYQSFVQFLQYYY) form a helical membrane-spanning segment. CoA is bound by residues glutamine 237, tyrosine 240, glutamine 241, and histidine 283. Topologically, residues 241–270 (QSGCLYRLRALGERHTMDLTVEGFQSWMWR) are cytoplasmic. Residues 271-294 (GLTFLLPFLFFGHFWQLFNALTLF) form a helical membrane-spanning segment. The Extracellular segment spans residues 295-304 (NLARDPECKE). A helical transmembrane segment spans residues 305–330 (WQVLMCGLPFLLLFLGNFFTTLRVVH). Topologically, residues 331 to 343 (QKFHSQQHGSKKD) are cytoplasmic. Lysine 332 lines the CoA pocket.

It belongs to the TMEM120 family. In terms of assembly, homodimer. Forms heterooligomer with TMEM120B. Interacts with PKD2; TMEM120A inhibits PKD2 channel activity through the physical association of PKD2 with TMEM120A.

The protein resides in the cell membrane. It localises to the nucleus inner membrane. It is found in the endoplasmic reticulum. Functionally, multifunctional protein involved in mechanosensation, and plays an essential role in lipid metabolism and adipocyte differentiation. May function as a potential ion channel involved in sensing mechanical stimuli. Mediates the mechanosensitivity of the PKD2-TMEM120A channel complex through direct physical interaction. TMEM120A seems to affect mechanosensation by inhibiting PIEZO2 channels, possibly by altering cellular lipid content. TMEM120A is structurally similar to a lipid-modifying enzyme, ELOVL7, and contains a bound coenzyme A molecule, which suggests it might function as an enzyme in lipid metabolism. Additionnaly, implicated in innate immune response against Zika virus. Acts as a key activator of the antiviral signaling involving STING1. The polypeptide is Transmembrane protein 120A (Rattus norvegicus (Rat)).